A 268-amino-acid chain; its full sequence is Undecaprenyl-diphosphatase (268 aa).

Helical transmembrane passes span 4 to 24, 50 to 70, 84 to 104, 109 to 129, 144 to 164, 184 to 204, 214 to 234, and 245 to 265; these read STTLVALVLGLLEGLTEFIPV, IQLGAVLAVLTVYASKLISVI, AAVLLAFLPAVVVGVMAHGFI, FETPILIAIMLILGGIILLFV, VPLGVALKIGFFQCLAMVPGV, AAEFSFFLSMPTMAGAFAFDL, GALGEIAVGFVAAFLAAVLVV, and GYSLFGWWRIIVGSIALAALL.

The protein belongs to the UppP family.

Its subcellular location is the cell inner membrane. It carries out the reaction di-trans,octa-cis-undecaprenyl diphosphate + H2O = di-trans,octa-cis-undecaprenyl phosphate + phosphate + H(+). Functionally, catalyzes the dephosphorylation of undecaprenyl diphosphate (UPP). Confers resistance to bacitracin. In Cereibacter sphaeroides (strain ATCC 17025 / ATH 2.4.3) (Rhodobacter sphaeroides), this protein is Undecaprenyl-diphosphatase.